Consider the following 160-residue polypeptide: Nucleotide-binding protein BP2916 (160 aa).

The protein belongs to the YajQ family.

In terms of biological role, nucleotide-binding protein. In Bordetella pertussis (strain Tohama I / ATCC BAA-589 / NCTC 13251), this protein is Nucleotide-binding protein BP2916.